A 319-amino-acid polypeptide reads, in one-letter code: Transaldolase (319 aa).

The active-site Schiff-base intermediate with substrate is the Lys-126.

It belongs to the transaldolase family. Type 1 subfamily. In terms of assembly, homodimer.

The protein localises to the cytoplasm. The enzyme catalyses D-sedoheptulose 7-phosphate + D-glyceraldehyde 3-phosphate = D-erythrose 4-phosphate + beta-D-fructose 6-phosphate. The protein operates within carbohydrate degradation; pentose phosphate pathway; D-glyceraldehyde 3-phosphate and beta-D-fructose 6-phosphate from D-ribose 5-phosphate and D-xylulose 5-phosphate (non-oxidative stage): step 2/3. Functionally, transaldolase is important for the balance of metabolites in the pentose-phosphate pathway. This Bordetella avium (strain 197N) protein is Transaldolase.